We begin with the raw amino-acid sequence, 140 residues long: Large ribosomal subunit protein uL11 (140 aa).

The protein belongs to the universal ribosomal protein uL11 family. Part of the ribosomal stalk of the 50S ribosomal subunit. Interacts with L10 and the large rRNA to form the base of the stalk. L10 forms an elongated spine to which L12 dimers bind in a sequential fashion forming a multimeric L10(L12)X complex. Post-translationally, one or more lysine residues are methylated.

Functionally, forms part of the ribosomal stalk which helps the ribosome interact with GTP-bound translation factors. The chain is Large ribosomal subunit protein uL11 from Enterococcus faecalis (strain ATCC 700802 / V583).